Reading from the N-terminus, the 305-residue chain is Acetyl-coenzyme A carboxylase carboxyl transferase subunit beta (305 aa).

The CoA carboxyltransferase N-terminal domain maps to 23–292 (GWLKCTHCNE…EENEPSPPPK (270 aa)). Zn(2+)-binding residues include Cys-27, Cys-30, Cys-46, and Cys-49. The C4-type zinc finger occupies 27–49 (CTHCNELIHANELEQNSNCCPKC). Residues 281 to 305 (FSEENEPSPPPKNLIKKTSPLKDKN) are disordered.

It belongs to the AccD/PCCB family. In terms of assembly, acetyl-CoA carboxylase is a heterohexamer composed of biotin carboxyl carrier protein (AccB), biotin carboxylase (AccC) and two subunits each of ACCase subunit alpha (AccA) and ACCase subunit beta (AccD). It depends on Zn(2+) as a cofactor.

It is found in the cytoplasm. It carries out the reaction N(6)-carboxybiotinyl-L-lysyl-[protein] + acetyl-CoA = N(6)-biotinyl-L-lysyl-[protein] + malonyl-CoA. The protein operates within lipid metabolism; malonyl-CoA biosynthesis; malonyl-CoA from acetyl-CoA: step 1/1. Component of the acetyl coenzyme A carboxylase (ACC) complex. Biotin carboxylase (BC) catalyzes the carboxylation of biotin on its carrier protein (BCCP) and then the CO(2) group is transferred by the transcarboxylase to acetyl-CoA to form malonyl-CoA. This chain is Acetyl-coenzyme A carboxylase carboxyl transferase subunit beta, found in Protochlamydia amoebophila (strain UWE25).